The primary structure comprises 999 residues: Caspase recruitment domain-containing protein 14 (999 aa).

The CARD domain maps to 15-107 (DEEMLWDMLE…DVYTLVTGLQ (93 aa)). The stretch at 125–411 (TECLAGAISS…QLRRLQAEAP (287 aa)) forms a coiled coil. Positions 409–565 (EAPGGPKQEA…RRPARKILSQ (157 aa)) are maintains the protein in an inactive state. Ser-541 is subject to Phosphoserine. In terms of domain architecture, PDZ spans 572–655 (QGDALLEQIG…SCYLSVKINT (84 aa)). Positions 803–986 (SESCFTLAPY…LLSCVRLAIA (184 aa)) constitute a Guanylate kinase-like domain.

Interacts (via CARD domain) with BCL10 (via CARD domain). Forms a complex with MALT1 and BCL10; resulting in the formation of a CBM (CARD14-BLC10-MALT1) complex. Interacts with TRAF2, TRAF3 and TRAF6.

Its subcellular location is the cytoplasm. Functionally, acts as a scaffolding protein that can activate the inflammatory transcription factor NF-kappa-B and p38/JNK MAP kinase signaling pathways. Forms a signaling complex with BCL10 and MALT1, and activates MALT1 proteolytic activity and inflammatory gene expression. MALT1 is indispensable for CARD14-induced activation of NF-kappa-B and p38/JNK MAP kinases. May play a role in signaling mediated by TRAF2, TRAF3 and TRAF6 and protects cells against apoptosis. This Mus musculus (Mouse) protein is Caspase recruitment domain-containing protein 14 (Card14).